The chain runs to 373 residues: MPSFSPTLLKLAAAALSALLLSGVAASATSRIKDLANIEGVRQNQLIGYGLVVGLNGTGDTLNNIPFTKQSLQAMLERMGVNIRGATIRTGNVAAVMVTGNLPAFATQGTRMDVTVSALGDAKNLQGGTLLVTPLLGADGNVYAVAQGSLAIGGFQAEGEAAKITRGVPTVGRIANGAIIEREIEFALNRLPNVRLALRNADFTTAKRIAAAVNDFLGTKSAEPIDPSTVQLSIPAEFKGNAVAFLTEIEQLQVEPDQAAKIIIDERSGIIVMGRDVRVATVAVAQGNLTVSISESPQVSQPNPLSRGRTTVTPNSRIGVTEDGKKLALVKDGVSLQQLVDGLNGLGIGPRDLIGILQAIKAAGAIEADIEVM.

The signal sequence occupies residues 1 to 27; the sequence is MPSFSPTLLKLAAAALSALLLSGVAAS.

This sequence belongs to the FlgI family. In terms of assembly, the basal body constitutes a major portion of the flagellar organelle and consists of four rings (L,P,S, and M) mounted on a central rod.

The protein resides in the periplasm. It is found in the bacterial flagellum basal body. Its function is as follows. Assembles around the rod to form the L-ring and probably protects the motor/basal body from shearing forces during rotation. In Rhodopseudomonas palustris (strain BisB5), this protein is Flagellar P-ring protein.